We begin with the raw amino-acid sequence, 538 residues long: Spindle pole body protein CSA6 (538 aa).

Disordered stretches follow at residues 1–31 (MEDSTEDIIKSFTLEQSPEIKPKPKSKTSDL) and 57–129 (QNIS…KYQD). Basic and acidic residues-rich tracts occupy residues 18–30 (PEIKPKPKSKTSD) and 57–68 (QNISDSEHDLTP). Polar residues-rich tracts occupy residues 86–96 (KFSSSIPQKPT) and 104–122 (TSPTKNYTDHINQLRSGPN). Residues 144–237 (KQEQNLKLEN…RNERDELVKD (94 aa)) are a coiled coil. Residues 304-323 (KKISEPSAAVEKDTTSEDKT) show a composition bias toward basic and acidic residues. Disordered stretches follow at residues 304–338 (KKISEPSAAVEKDTTSEDKTPPIPNTANSSDTPRM) and 355–458 (SSNN…STKY). Composition is skewed to polar residues over residues 355 to 392 (SSNNKNTLSPKQAINSQTYSQPNNFSNNTVPPSQSAAY) and 407 to 425 (TNFYSSSTPNTNGYNQSSQ). The span at 426 to 444 (SDERPETFELPHVAKDHWL) shows a compositional bias: basic and acidic residues. The span at 446 to 457 (RPTSERSTQSTK) shows a compositional bias: polar residues.

It localises to the cytoplasm. Its subcellular location is the cytoskeleton. The protein resides in the microtubule organizing center. The protein localises to the spindle pole body. Plays a role in mitotic spindle pole body organization, possibly at the point of spindle pole body separation. Required for mitotic exit. The protein is Spindle pole body protein CSA6 of Candida albicans (strain SC5314 / ATCC MYA-2876) (Yeast).